The primary structure comprises 316 residues: uncharacterized protein (316 aa).

4 BNR repeats span residues F62–P73, K124–N135, F196–V207, and Y242–Q253.

This is an uncharacterized protein from Saccharomyces cerevisiae (strain ATCC 204508 / S288c) (Baker's yeast).